Reading from the N-terminus, the 452-residue chain is Septin-10 (452 aa).

In terms of domain architecture, Septin-type G spans 36-302 (QGFCFNILCV…ELYRRCKLQE (267 aa)). A G1 motif region spans residues 46–53 (GETGIGKS). GTP-binding positions include 46 to 53 (GETGIGKS), G101, 182 to 190 (KADTISKSE), G236, and R251. Positions 98 to 101 (NTVG) are G3 motif. Residues 181–184 (AKAD) are G4 motif. S414 carries the phosphoserine modification.

It belongs to the TRAFAC class TrmE-Era-EngA-EngB-Septin-like GTPase superfamily. Septin GTPase family. As to quaternary structure, septins polymerize into heterooligomeric protein complexes that form filaments, and can associate with cellular membranes, actin filaments and microtubules. GTPase activity is required for filament formation. Interacts with ADGB. Post-translationally, proteolytically cleaved in vitro in a calmodulin-dependent manner.

The protein localises to the cytoplasm. It is found in the cytoskeleton. It localises to the cell projection. Its subcellular location is the cilium. The protein resides in the flagellum. Functionally, filament-forming cytoskeletal GTPase. May play a role in cytokinesis (Potential). In Mus musculus (Mouse), this protein is Septin-10.